The following is a 186-amino-acid chain: Cytochrome c oxidase polypeptide 5, mitochondrial (186 aa).

The N-terminal 20 residues, 1-20, are a transit peptide targeting the mitochondrion; it reads MYLSKIICKKVPMKLLCTRN. Topologically, residues 21–107 are mitochondrial matrix; it reads AATVSAAATN…GPRAFSHISQ (87 aa). Residues 108–128 form a helical membrane-spanning segment; that stretch reads KTVFWGTVAGLTIGVVLFGLI. Residues 129 to 186 are Mitochondrial intermembrane-facing; the sequence is RTQAAPSPRTMTREWQEKSNEYMKENKINPISGEASEGFKGRGQISGGIFSPSEKDKK. Positions 149–186 are disordered; that stretch reads EYMKENKINPISGEASEGFKGRGQISGGIFSPSEKDKK.

It belongs to the cytochrome c oxidase IV family. As to quaternary structure, component of the cytochrome c oxidase (complex IV, CIV), a multisubunit enzyme composed of a catalytic core of 3 subunits and seevral supernumerary subunits. The complex exists as a monomer or a dimer and forms supercomplexes (SCs) in the inner mitochondrial membrane with ubiquinol-cytochrome c oxidoreductase (cytochrome b-c1 complex, complex III, CIII).

The protein localises to the mitochondrion inner membrane. It functions in the pathway energy metabolism; oxidative phosphorylation. Component of the cytochrome c oxidase, the last enzyme in the mitochondrial electron transport chain which drives oxidative phosphorylation. The respiratory chain contains 3 multisubunit complexes succinate dehydrogenase (complex II, CII), ubiquinol-cytochrome c oxidoreductase (cytochrome b-c1 complex, complex III, CIII) and cytochrome c oxidase (complex IV, CIV), that cooperate to transfer electrons derived from NADH and succinate to molecular oxygen, creating an electrochemical gradient over the inner membrane that drives transmembrane transport and the ATP synthase. Cytochrome c oxidase is the component of the respiratory chain that catalyzes the reduction of oxygen to water. Electrons originating from reduced cytochrome c in the intermembrane space (IMS) are transferred via the dinuclear copper A center (CU(A)) of subunit 2 and heme A of subunit 1 to the active site in subunit 1, a binuclear center (BNC) formed by heme A3 and copper B (CU(B)). The BNC reduces molecular oxygen to 2 water molecules using 4 electrons from cytochrome c in the IMS and 4 protons from the mitochondrial matrix. The chain is Cytochrome c oxidase polypeptide 5, mitochondrial (cox5) from Schizosaccharomyces pombe (strain 972 / ATCC 24843) (Fission yeast).